A 312-amino-acid polypeptide reads, in one-letter code: L-lactate dehydrogenase (312 aa).

Residues V14, D35, and Y66 each contribute to the NAD(+) site. Substrate is bound by residues Q83 and R90. Residues S103, 120–122 (ASN), and S145 each bind NAD(+). 122 to 125 (NPVD) provides a ligand contact to substrate. 150–153 (DSAR) serves as a coordination point for substrate. Catalysis depends on H177, which acts as the Proton acceptor. Y220 bears the Phosphotyrosine mark. A substrate-binding site is contributed by T229.

Belongs to the LDH/MDH superfamily. LDH family. As to quaternary structure, homotetramer.

The protein resides in the cytoplasm. It catalyses the reaction (S)-lactate + NAD(+) = pyruvate + NADH + H(+). The protein operates within fermentation; pyruvate fermentation to lactate; (S)-lactate from pyruvate: step 1/1. Functionally, catalyzes the conversion of lactate to pyruvate. This chain is L-lactate dehydrogenase, found in Mycoplasma genitalium (strain ATCC 33530 / DSM 19775 / NCTC 10195 / G37) (Mycoplasmoides genitalium).